Reading from the N-terminus, the 285-residue chain is Bis(5'-nucleosyl)-tetraphosphatase, symmetrical (285 aa).

The protein belongs to the Ap4A hydrolase family.

The enzyme catalyses P(1),P(4)-bis(5'-adenosyl) tetraphosphate + H2O = 2 ADP + 2 H(+). Functionally, hydrolyzes diadenosine 5',5'''-P1,P4-tetraphosphate to yield ADP. This is Bis(5'-nucleosyl)-tetraphosphatase, symmetrical from Colwellia psychrerythraea (strain 34H / ATCC BAA-681) (Vibrio psychroerythus).